A 98-amino-acid polypeptide reads, in one-letter code: Homeobox protein Ht-En (98 aa).

The segment at residues 3–62 (EKRPRTAFTGDQLARLKREFSENKYLTEQRRTCLAKELNLNESQIKIWFQNKRAKMKKAS) is a DNA-binding region (homeobox). The interval 79-98 (NHSSSSSSSSSSSSSIFLLA) is disordered. Residues 81–98 (SSSSSSSSSSSSSIFLLA) are compositionally biased toward low complexity.

It belongs to the engrailed homeobox family. In terms of processing, phosphorylated in the Ser-rich domain.

Its subcellular location is the nucleus. Functionally, this protein specifies the body segmentation pattern. The sequence is that of Homeobox protein Ht-En (HT-EN) from Helobdella triserialis (Leech).